A 238-amino-acid chain; its full sequence is Probable transcriptional regulatory protein SERP0322 (238 aa).

Belongs to the TACO1 family. YeeN subfamily.

The protein resides in the cytoplasm. This chain is Probable transcriptional regulatory protein SERP0322, found in Staphylococcus epidermidis (strain ATCC 35984 / DSM 28319 / BCRC 17069 / CCUG 31568 / BM 3577 / RP62A).